The chain runs to 136 residues: Succinate dehydrogenase 2 membrane subunit SdhC (136 aa).

3 helical membrane passes run 32–52 (RISG…AAML), 70–90 (IVGL…LNGI), and 109–129 (LWII…VVGI). His85 serves as a coordination point for heme.

The protein belongs to the cytochrome b560 family. Part of an enzyme complex containing four subunits: a flavoprotein (SdhA), an iron-sulfur protein (SdhB), plus two membrane-anchoring proteins (SdhC and SdhD). The cofactor is heme.

Its subcellular location is the cell membrane. Its function is as follows. Membrane-anchoring subunit of succinate dehydrogenase 2 (Sdh2). Sdh2 may catalyze the two-electron oxidation of succinate to fumarate with a corresponding reduction of quinone to quinol under low oxygen conditions, when the primary aerobic succinate dehydrogenase (Sdh1) is inhibited. Sdh2 seems to be the generator of the proton motive force (PMF) under hypoxia. This chain is Succinate dehydrogenase 2 membrane subunit SdhC, found in Mycobacterium tuberculosis (strain ATCC 25618 / H37Rv).